A 467-amino-acid chain; its full sequence is Cysteine--tRNA ligase (467 aa).

C27 contacts Zn(2+). The short motif at 29 to 39 (ATVQGLPHIGH) is the 'HIGH' region element. Zn(2+) contacts are provided by C209, H234, and E238. Residues 265–269 (KMSKS) carry the 'KMSKS' region motif. Residue K268 coordinates ATP.

It belongs to the class-I aminoacyl-tRNA synthetase family. As to quaternary structure, monomer. Zn(2+) serves as cofactor.

The protein localises to the cytoplasm. It carries out the reaction tRNA(Cys) + L-cysteine + ATP = L-cysteinyl-tRNA(Cys) + AMP + diphosphate. The sequence is that of Cysteine--tRNA ligase from Mycolicibacterium gilvum (strain PYR-GCK) (Mycobacterium gilvum (strain PYR-GCK)).